The chain runs to 186 residues: MEPTRDNPLFGGAFSATLPPGAIDVSDLRPVPDHQEVFCHRVTDQSLIVELLELQAHVQGEEAARYHFEDVGGVQEARAVQVETVQPLVLEKLALRGCCQEAWILSGQQQVAKENQQVAKYVTLHQALLRLPQYQTDLLLTFNQPPPENRSSLGPENLSIPPWSLGDFEQLVTSLTLHDPNIFGPE.

An interaction with RAN region spans residues 27–70 (DLRPVPDHQEVFCHRVTDQSLIVELLELQAHVQGEEAARYHFED).

The protein belongs to the MOG1 family. Monomer. Interacts with RAN, both RAN-GTP and RAN-GDP. Competes with RCC1 for a common binding site on RAN and thereby inhibits RCC1-mediated nucleotide exchange. Forms a complex with RAN-GTP and RANBP1. Interacts with the cytoplasmic loop 2 of SCN5A.

It is found in the nucleus. The protein resides in the cytoplasm. It localises to the perinuclear region. Its subcellular location is the cell membrane. In terms of biological role, may regulate the intracellular trafficking of RAN. Promotes guanine nucleotide release from RAN and inhibits binding of new GTP by preventing the binding of the RAN guanine nucleotide exchange factor RCC1. Regulates the levels of GTP-bound RAN in the nucleus, and thereby plays a role in the regulation of RAN-dependent mitotic spindle dynamics. Enhances the expression of SCN5A at the cell membrane in cardiomyocytes. This is Ran guanine nucleotide release factor (RANGRF) from Bos taurus (Bovine).